Consider the following 433-residue polypeptide: Serine/threonine-protein kinase KDX1 (433 aa).

The Protein kinase domain maps to phenylalanine 23–leucine 318. ATP-binding positions include isoleucine 29–isoleucine 37 and lysine 55. Aspartate 153 serves as the catalytic Proton acceptor.

It belongs to the protein kinase superfamily. Ser/Thr protein kinase family. As to quaternary structure, interacts with RLM1.

The catalysed reaction is L-seryl-[protein] + ATP = O-phospho-L-seryl-[protein] + ADP + H(+). It catalyses the reaction L-threonyl-[protein] + ATP = O-phospho-L-threonyl-[protein] + ADP + H(+). Serine/threonine-protein kinase involved in the SLT2 mitogen-activated (MAP) kinase signaling pathway that regulates cell wall integrity. May also be involved in the mating pheromone and the CWI MAPK pathways. The protein is Serine/threonine-protein kinase KDX1 (KDX1) of Saccharomyces cerevisiae (strain ATCC 204508 / S288c) (Baker's yeast).